Here is a 373-residue protein sequence, read N- to C-terminus: MDSDDDNMEEVVEGPLDEDDQPHGFCTVTYSSSDRFEGHFVHGEKNGKGKFFFFDGSTLEGFYVDDALQGQGVYTYEDGGALHGFYVDGELNGPAQEFNSDGQLVFRGRYKDNIRYGMCWVYYPDGACVVGEVNEEGEMTGKAVAYVYPDGRTALYGSFVDGELIEARLATLTTQENGRPHFTVDPDSPIYCYDKSTSSCIAGHKLLPDPYESQRVYVGQSLISGAGEGLFAQTEAEANTVMAFYNGVRITHTEVDSRDWSMNGNTISLDEDTVIDVPAPFNMTENYCGSLGHKANHSFSPNCKYDQYVHPRFGQIKCIRTIRAVEKDEELTVAYGYDHEPSGKSGPEAPEWYTKQFLEFQQRESGKGADETC.

Residues M1–D20 are disordered. 3 MORN repeats span residues F36–T58, L59–A81, and F106–C128. Residues Q214–G336 form the SET domain. Residues A226 to E228, N296, and H297 each bind S-adenosyl-L-methionine.

It belongs to the class V-like SAM-binding methyltransferase superfamily. Histone-lysine methyltransferase family. SET7 subfamily.

It localises to the nucleus. The protein resides in the chromosome. The enzyme catalyses L-lysyl(4)-[histone H3] + S-adenosyl-L-methionine = N(6)-methyl-L-lysyl(4)-[histone H3] + S-adenosyl-L-homocysteine + H(+). The catalysed reaction is L-lysyl-[protein] + S-adenosyl-L-methionine = N(6)-methyl-L-lysyl-[protein] + S-adenosyl-L-homocysteine + H(+). Histone methyltransferase that specifically monomethylates 'Lys-4' of histone H3. H3 'Lys-4' methylation represents a specific tag for epigenetic transcriptional activation. Plays a central role in the transcriptional activation of genes. Also has methyltransferase activity toward non-histone proteins. The protein is Histone-lysine N-methyltransferase SETD7 (setd7) of Danio rerio (Zebrafish).